The chain runs to 465 residues: Eukaryotic translation initiation factor 3 subunit M (465 aa).

One can recognise a PCI domain in the interval 215 to 383; the sequence is EEMSYNHVIL…GEFLVHRATY (169 aa). A disordered region spans residues 429–465; that stretch reads AAAESGREGGARGGAGERRRGGGGHQGPREVDLVGGD. Basic and acidic residues-rich tracts occupy residues 433–448 and 455–465; these read SGRE…ERRR and GPREVDLVGGD.

It belongs to the eIF-3 subunit M family. As to quaternary structure, component of the eukaryotic translation initiation factor 3 (eIF-3) complex.

It is found in the cytoplasm. In terms of biological role, component of the eukaryotic translation initiation factor 3 (eIF-3) complex, which is involved in protein synthesis of a specialized repertoire of mRNAs and, together with other initiation factors, stimulates binding of mRNA and methionyl-tRNAi to the 40S ribosome. The eIF-3 complex specifically targets and initiates translation of a subset of mRNAs involved in cell proliferation. The protein is Eukaryotic translation initiation factor 3 subunit M of Coccidioides immitis (strain RS) (Valley fever fungus).